Reading from the N-terminus, the 96-residue chain is Uteroglobin (96 aa).

An N-terminal signal peptide occupies residues methionine 1–serine 21.

The protein belongs to the secretoglobin family. Antiparallel homodimer; disulfide-linked. Interaction with LMBR1L is controversial.

Its subcellular location is the secreted. In terms of biological role, binds phosphatidylcholine, phosphatidylinositol, polychlorinated biphenyls (PCB) and weakly progesterone, potent inhibitor of phospholipase A2. The protein is Uteroglobin (SCGB1A1) of Mesocricetus auratus (Golden hamster).